The primary structure comprises 75 residues: Large ribosomal subunit protein bL28 (75 aa).

Belongs to the bacterial ribosomal protein bL28 family.

This Buchnera aphidicola subsp. Acyrthosiphon pisum (strain APS) (Acyrthosiphon pisum symbiotic bacterium) protein is Large ribosomal subunit protein bL28.